Reading from the N-terminus, the 66-residue chain is MGYYKKYKEEYYTVKKTYYKKYYEYDKKDYDCDYDKKYDDYDKKYYDHDKKDYDYVVEYKKHKKHY.

It to B.subtilis protein YnzH.

The protein is Spore coat protein C (cotC) of Bacillus subtilis (strain 168).